A 347-amino-acid chain; its full sequence is Protein-glutamate methylesterase/protein-glutamine glutaminase 4 (347 aa).

Residues 3–121 enclose the Response regulatory domain; it reads KVLIVDDSAS…HPNHEREARS (119 aa). Aspartate 54 is modified (4-aspartylphosphate). The CheB-type methylesterase domain occupies 157 to 342; that stretch reads PARLKAVAIG…PDRIVTALTS (186 aa). Active-site residues include serine 168, histidine 195, and aspartate 289.

This sequence belongs to the CheB family. Phosphorylated by CheA. Phosphorylation of the N-terminal regulatory domain activates the methylesterase activity.

Its subcellular location is the cytoplasm. It catalyses the reaction [protein]-L-glutamate 5-O-methyl ester + H2O = L-glutamyl-[protein] + methanol + H(+). The catalysed reaction is L-glutaminyl-[protein] + H2O = L-glutamyl-[protein] + NH4(+). Its function is as follows. Involved in chemotaxis. Part of a chemotaxis signal transduction system that modulates chemotaxis in response to various stimuli. Catalyzes the demethylation of specific methylglutamate residues introduced into the chemoreceptors (methyl-accepting chemotaxis proteins or MCP) by CheR. Also mediates the irreversible deamidation of specific glutamine residues to glutamic acid. The sequence is that of Protein-glutamate methylesterase/protein-glutamine glutaminase 4 from Geobacter metallireducens (strain ATCC 53774 / DSM 7210 / GS-15).